The chain runs to 190 residues: Potassium-transporting ATPase KdpC subunit (190 aa).

A helical transmembrane segment spans residues 10–30 (TFIFLLLITGGVYPLLTTVLG).

It belongs to the KdpC family. The system is composed of three essential subunits: KdpA, KdpB and KdpC.

It is found in the cell inner membrane. Part of the high-affinity ATP-driven potassium transport (or Kdp) system, which catalyzes the hydrolysis of ATP coupled with the electrogenic transport of potassium into the cytoplasm. This subunit acts as a catalytic chaperone that increases the ATP-binding affinity of the ATP-hydrolyzing subunit KdpB by the formation of a transient KdpB/KdpC/ATP ternary complex. The polypeptide is Potassium-transporting ATPase KdpC subunit (Escherichia coli (strain SE11)).